The chain runs to 71 residues: Large ribosomal subunit protein bL31 (71 aa).

Cysteine 16, cysteine 18, cysteine 37, and cysteine 40 together coordinate Zn(2+).

The protein belongs to the bacterial ribosomal protein bL31 family. Type A subfamily. In terms of assembly, part of the 50S ribosomal subunit. Zn(2+) is required as a cofactor.

Binds the 23S rRNA. This is Large ribosomal subunit protein bL31 from Marinomonas sp. (strain MWYL1).